We begin with the raw amino-acid sequence, 916 residues long: Translation initiation factor IF-2 (916 aa).

Residues 58–317 are disordered; the sequence is LEAEGHLPGA…GVTVPRGDGG (260 aa). The span at 120 to 142 shows a compositional bias: low complexity; sequence EKVAASEAADAKPAAGAPADTAK. The segment covering 195–206 has biased composition (pro residues); the sequence is SNIPRPAPPRPG. 2 stretches are compositionally biased toward gly residues: residues 214–227 and 235–282; these read RPGGGQRQGGGGRP and SAGG…GRGG. Positions 283 to 294 are enriched in basic residues; the sequence is GKSKARKSKRAK. The region spanning 409-583 is the tr-type G domain; sequence IRPPVVTVMG…LTADAGLDLR (175 aa). A G1 region spans residues 418–425; sequence GHVDHGKT. 418-425 is a GTP binding site; it reads GHVDHGKT. Positions 443 to 447 are G2; that stretch reads GITQH. The G3 stretch occupies residues 468–471; that stretch reads DTPG. Residues 468 to 472 and 522 to 525 each bind GTP; these read DTPGH and NKVD. The segment at 522–525 is G4; sequence NKVD. The G5 stretch occupies residues 558-560; that stretch reads SAR.

Belongs to the TRAFAC class translation factor GTPase superfamily. Classic translation factor GTPase family. IF-2 subfamily.

The protein resides in the cytoplasm. Functionally, one of the essential components for the initiation of protein synthesis. Protects formylmethionyl-tRNA from spontaneous hydrolysis and promotes its binding to the 30S ribosomal subunits. Also involved in the hydrolysis of GTP during the formation of the 70S ribosomal complex. The chain is Translation initiation factor IF-2 from Leifsonia xyli subsp. xyli (strain CTCB07).